Reading from the N-terminus, the 765-residue chain is Polyadenylate-binding protein, cytoplasmic and nuclear (765 aa).

Low complexity predominate over residues 1–37 (MSADASTTPAADSNVTSTPETSTTPAAPAPEVTAVES). Positions 1–49 (MSADASTTPAADSNVTSTPETSTTPAAPAPEVTAVESTTAPNASQPHSA) are disordered. Residues 38 to 48 (TTAPNASQPHS) are compositionally biased toward polar residues. RRM domains are found at residues 49–127 (ASLY…WSQR), 137–214 (GNVF…HHIS), 230–307 (TNVY…RAQK), and 333–470 (VNLY…LAQR). Disordered regions lie at residues 364–427 (VMRD…ADKK) and 619–657 (PGYG…PEEA). A compositionally biased stretch (basic and acidic residues) spans 377 to 427 (ESDKEKENKEATKENEKESSEAEKAEKTEEKPADSGDEKKEDKESKKADKK). Over residues 628–637 (VPVQQGQMRP) the composition is skewed to low complexity. The 78-residue stretch at 659–736 (AGGLTAQALS…ALNVYDEYMK (78 aa)) folds into the PABC domain. The interval 737–765 (NKGGESEATGEAAKPKEAAKETSTEENKS) is disordered. The span at 749-765 (AKPKEAAKETSTEENKS) shows a compositional bias: basic and acidic residues.

Belongs to the polyadenylate-binding protein type-1 family.

The protein resides in the cytoplasm. It is found in the nucleus. Functionally, binds the poly(A) tail of mRNA. Appears to be an important mediator of the multiple roles of the poly(A) tail in mRNA biogenesis, stability and translation. In the nucleus, involved in both mRNA cleavage and polyadenylation. Is also required for efficient mRNA export to the cytoplasm. Acts in concert with a poly(A)-specific nuclease (PAN) to affect poly(A) tail shortening, which may occur concomitantly with either nucleocytoplasmic mRNA transport or translational initiation. In the cytoplasm, stimulates translation initiation and regulates mRNA decay through translation termination-coupled poly(A) shortening, probably mediated by PAN. This chain is Polyadenylate-binding protein, cytoplasmic and nuclear (pab1), found in Aspergillus oryzae (strain ATCC 42149 / RIB 40) (Yellow koji mold).